Here is a 106-residue protein sequence, read N- to C-terminus: ATP-dependent Clp protease adapter protein ClpS (106 aa).

It belongs to the ClpS family. Binds to the N-terminal domain of the chaperone ClpA.

Involved in the modulation of the specificity of the ClpAP-mediated ATP-dependent protein degradation. The chain is ATP-dependent Clp protease adapter protein ClpS from Nocardia farcinica (strain IFM 10152).